Reading from the N-terminus, the 988-residue chain is Transposase for transposon Tn501 (988 aa).

The protein belongs to the transposase 7 family.

Required for transposition of transposon Tn501. In Pseudomonas aeruginosa, this protein is Transposase for transposon Tn501 (tnpA).